Here is a 642-residue protein sequence, read N- to C-terminus: Chaperone protein DnaK (642 aa).

The residue at position 198 (Thr-198) is a Phosphothreonine; by autocatalysis. Residues 602–642 form a disordered region; it reads EAAGGAEAEAAAGGHGGASGSHDDKVVDADFEEVDGDKKGK. Residues 603 to 613 are compositionally biased toward low complexity; that stretch reads AAGGAEAEAAA.

It belongs to the heat shock protein 70 family.

Acts as a chaperone. The protein is Chaperone protein DnaK of Paramagnetospirillum magneticum (strain ATCC 700264 / AMB-1) (Magnetospirillum magneticum).